The sequence spans 323 residues: Acetyl-coenzyme A carboxylase carboxyl transferase subunit alpha (323 aa).

The CoA carboxyltransferase C-terminal domain occupies 39-293 (RLAGKSQQLT…KRSLAESLRQ (255 aa)).

This sequence belongs to the AccA family. In terms of assembly, acetyl-CoA carboxylase is a heterohexamer composed of biotin carboxyl carrier protein (AccB), biotin carboxylase (AccC) and two subunits each of ACCase subunit alpha (AccA) and ACCase subunit beta (AccD).

It is found in the cytoplasm. It carries out the reaction N(6)-carboxybiotinyl-L-lysyl-[protein] + acetyl-CoA = N(6)-biotinyl-L-lysyl-[protein] + malonyl-CoA. Its pathway is lipid metabolism; malonyl-CoA biosynthesis; malonyl-CoA from acetyl-CoA: step 1/1. Its function is as follows. Component of the acetyl coenzyme A carboxylase (ACC) complex. First, biotin carboxylase catalyzes the carboxylation of biotin on its carrier protein (BCCP) and then the CO(2) group is transferred by the carboxyltransferase to acetyl-CoA to form malonyl-CoA. The sequence is that of Acetyl-coenzyme A carboxylase carboxyl transferase subunit alpha from Cupriavidus pinatubonensis (strain JMP 134 / LMG 1197) (Cupriavidus necator (strain JMP 134)).